The primary structure comprises 255 residues: Polycomb group RING finger protein 5 (255 aa).

The RING-type zinc-finger motif lies at 18–57; sequence CYICKGYLIKPTTVTECLHTFCKTCIVQHFEDSNDCPRCG. Residues 97-132 form a disordered region; it reads WKKNKPQENGQDDMSKVDKPKVDEEGDENQDDKDYH. Positions 109 to 119 are enriched in basic and acidic residues; that stretch reads DMSKVDKPKVD.

As to quaternary structure, component of a PRC1-like complex that contains PCGF5, RNF2 and UBE2D3. Interacts with RNF2; the interaction is direct. Interacts with CBX6, CBX7 and CBX8. Interacts with AUTS2; the interaction is direct. Identified in a complex that contains AUTS2, PCGF5, CSNK2B and RNF2.

The protein resides in the nucleus. Its subcellular location is the nucleoplasm. Component of a Polycomb group (PcG) multiprotein PRC1-like complex, a complex class required to maintain the transcriptionally repressive state of many genes, including Hox genes, throughout development. PcG PRC1 complex acts via chromatin remodeling and modification of histones; it mediates monoubiquitination of histone H2A 'Lys-119', rendering chromatin heritably changed in its expressibility. Within the PRC1-like complex, regulates RNF2 ubiquitin ligase activity. Plays a redundant role with PCGF3 as part of a PRC1-like complex that mediates monoubiquitination of histone H2A 'Lys-119' on the X chromosome and is required for normal silencing of one copy of the X chromosome in XX females. The protein is Polycomb group RING finger protein 5 (PCGF5) of Bos taurus (Bovine).